A 247-amino-acid polypeptide reads, in one-letter code: 1-(5-phosphoribosyl)-5-[(5-phosphoribosylamino)methylideneamino] imidazole-4-carboxamide isomerase (247 aa).

D16 serves as the catalytic Proton acceptor. D135 (proton donor) is an active-site residue.

It belongs to the HisA/HisF family.

The protein localises to the cytoplasm. The enzyme catalyses 1-(5-phospho-beta-D-ribosyl)-5-[(5-phospho-beta-D-ribosylamino)methylideneamino]imidazole-4-carboxamide = 5-[(5-phospho-1-deoxy-D-ribulos-1-ylimino)methylamino]-1-(5-phospho-beta-D-ribosyl)imidazole-4-carboxamide. The protein operates within amino-acid biosynthesis; L-histidine biosynthesis; L-histidine from 5-phospho-alpha-D-ribose 1-diphosphate: step 4/9. In Paenarthrobacter aurescens (strain TC1), this protein is 1-(5-phosphoribosyl)-5-[(5-phosphoribosylamino)methylideneamino] imidazole-4-carboxamide isomerase.